Reading from the N-terminus, the 497-residue chain is UDP-N-acetylmuramoyl-L-alanyl-D-glutamate--2,6-diaminopimelate ligase (497 aa).

Ser32 serves as a coordination point for UDP-N-acetyl-alpha-D-muramoyl-L-alanyl-D-glutamate. 113–119 (GTNGKTT) lines the ATP pocket. UDP-N-acetyl-alpha-D-muramoyl-L-alanyl-D-glutamate-binding positions include 155-156 (TT), Ser182, Gln188, and Arg190. Lys222 bears the N6-carboxylysine mark. Meso-2,6-diaminopimelate-binding positions include Arg385, 409 to 412 (DNPR), Gly460, and Glu464. The Meso-diaminopimelate recognition motif signature appears at 409–412 (DNPR).

The protein belongs to the MurCDEF family. MurE subfamily. Requires Mg(2+) as cofactor. Post-translationally, carboxylation is probably crucial for Mg(2+) binding and, consequently, for the gamma-phosphate positioning of ATP.

The protein localises to the cytoplasm. The catalysed reaction is UDP-N-acetyl-alpha-D-muramoyl-L-alanyl-D-glutamate + meso-2,6-diaminopimelate + ATP = UDP-N-acetyl-alpha-D-muramoyl-L-alanyl-gamma-D-glutamyl-meso-2,6-diaminopimelate + ADP + phosphate + H(+). It participates in cell wall biogenesis; peptidoglycan biosynthesis. Catalyzes the addition of meso-diaminopimelic acid to the nucleotide precursor UDP-N-acetylmuramoyl-L-alanyl-D-glutamate (UMAG) in the biosynthesis of bacterial cell-wall peptidoglycan. The sequence is that of UDP-N-acetylmuramoyl-L-alanyl-D-glutamate--2,6-diaminopimelate ligase from Thermosynechococcus vestitus (strain NIES-2133 / IAM M-273 / BP-1).